Reading from the N-terminus, the 265-residue chain is Gamma-secretase subunit APH-1A (265 aa).

Over 1-2 (MG) the chain is Lumenal. A helical membrane pass occupies residues 3-23 (AAVFFGCTFVAFGPAFSLFLI). The Cytoplasmic segment spans residues 24-31 (TVAGDPLR). Residues 32-52 (VIILVAGAFFWLVSLLLASVV) traverse the membrane as a helical segment. Residues 53–68 (WFILVHVTDRSDARLQ) are Lumenal-facing. Residues 69–89 (YGLLIFGAAVSVLLQEVFRFA) form a helical membrane-spanning segment. The Cytoplasmic portion of the chain corresponds to 90-118 (YYKLLKKADEGLASLSEDGRSPISIRQMA). Residues 119–139 (YVSGLSFGIISGVFSVINILA) traverse the membrane as a helical segment. Residues 140-158 (DALGPGVVGIHGDSPYYFL) lie on the Lumenal side of the membrane. A helical membrane pass occupies residues 159–179 (TSAFLTAAIILLHTFWGVVFF). The Cytoplasmic segment spans residues 180–186 (DACERRR). The helical transmembrane segment at 187-207 (YWALGLVVGSHLLTSGLTFLN) threads the bilayer. At 208 to 213 (PWYEAS) the chain is on the lumenal side. The helical transmembrane segment at 214–234 (LLPIYAVTVSMGLWAFITAGG) threads the bilayer. The Cytoplasmic segment spans residues 235–265 (SLRSIQRSLSCRRQEDSRVMVYSALRIPPED).

This sequence belongs to the APH-1 family. The functional gamma-secretase complex is composed of at least four polypeptides: a presenilin homodimer (PSEN1 or PSEN2), nicastrin (NCSTN), APH1 (APH1A or APH1B) and PSENEN/PEN2.

It localises to the endoplasmic reticulum membrane. It is found in the golgi apparatus. The protein localises to the golgi stack membrane. Its function is as follows. Non-catalytic subunit of the gamma-secretase complex, an endoprotease complex that catalyzes the intramembrane cleavage of integral membrane proteins such as Notch receptors and APP (amyloid-beta precursor protein). Required for normal gamma-secretase assembly. The gamma-secretase complex plays a role in Notch and Wnt signaling cascades and regulation of downstream processes via its role in processing key regulatory proteins, and by regulating cytosolic CTNNB1 levels. The chain is Gamma-secretase subunit APH-1A (Aph1a) from Mus musculus (Mouse).